An 856-amino-acid chain; its full sequence is Genome polyprotein (856 aa).

One can recognise a Peptidase S30 domain in the interval 141 to 284 (KLTEGQMNHL…QSVLNSMIQF (144 aa)). Active-site for P1 proteinase activity residues include His-192, Asp-201, and Ser-235. The Involved in interaction with stylet and aphid transmission signature appears at 334–337 (KITC). The Involved in virions binding and aphid transmission signature appears at 592-594 (PTK). In terms of domain architecture, Peptidase C6 spans 618-740 (LYIAKQGYCY…ESDIKHYRVG (123 aa)). Active-site for helper component proteinase activity residues include Cys-626 and His-699.

This sequence belongs to the potyviridae genome polyprotein family. Genome polyprotein of potyviruses undergoes post-translational proteolytic processing by the main proteinase NIa-pro resulting in the production of at least ten individual proteins. The P1 proteinase and the HC-pro cleave only their respective C-termini autocatalytically. 6K1 is essential for proper proteolytic separation of P3 from CI.

The enzyme catalyses Hydrolyzes a Gly-|-Gly bond at its own C-terminus, commonly in the sequence -Tyr-Xaa-Val-Gly-|-Gly, in the processing of the potyviral polyprotein.. In terms of biological role, required for aphid transmission and also has proteolytic activity. Only cleaves a Gly-Gly dipeptide at its own C-terminus. Interacts with virions and aphid stylets. Acts as a suppressor of RNA-mediated gene silencing, also known as post-transcriptional gene silencing (PTGS), a mechanism of plant viral defense that limits the accumulation of viral RNAs. May have RNA-binding activity. The polypeptide is Genome polyprotein (Potato virus Y (strain O) (PVY)).